The sequence spans 147 residues: MKALVILGFLFLSVAVQGKVFERCELARTLKKLGLDGYKGVSLANWLCLTKWESSYNTKATNYNPSSESTDYGIFQINSKWWCNDGKTPNAVDGCHVSCSELMENDIAKAVACAKHIVSEQGITAWVAWKSHCRDHDVSSYVEGCTL.

A signal peptide spans 1–18 (MKALVILGFLFLSVAVQG). A C-type lysozyme domain is found at 19 to 147 (KVFERCELAR…VSSYVEGCTL (129 aa)). 4 cysteine pairs are disulfide-bonded: Cys-24-Cys-145, Cys-48-Cys-133, Cys-83-Cys-99, and Cys-95-Cys-113. Catalysis depends on residues Glu-53 and Asp-71.

It belongs to the glycosyl hydrolase 22 family. Monomer. In terms of tissue distribution, stomach-specific.

It catalyses the reaction Hydrolysis of (1-&gt;4)-beta-linkages between N-acetylmuramic acid and N-acetyl-D-glucosamine residues in a peptidoglycan and between N-acetyl-D-glucosamine residues in chitodextrins.. Lysozymes have primarily a bacteriolytic function; those in tissues and body fluids are associated with the monocyte-macrophage system and enhance the activity of immunoagents. The protein is Lysozyme C-2 (LYZ2) of Bos taurus (Bovine).